The chain runs to 303 residues: tRNA (guanine-N(7)-)-methyltransferase (303 aa).

Residues 1–64 (MPKPHQVQVI…STSDKISLPR (64 aa)) are disordered. Over residues 10 to 38 (IKDRETQLREQQEAESKRRTYRDVKEETR) the composition is skewed to basic and acidic residues. Residues glycine 118, 141 to 142 (EI), 177 to 178 (NA), and cysteine 197 each bind S-adenosyl-L-methionine. Residue aspartate 200 is part of the active site. An S-adenosyl-L-methionine-binding site is contributed by 275–277 (TEE).

Belongs to the class I-like SAM-binding methyltransferase superfamily. TrmB family. As to quaternary structure, forms a complex with TRM82.

It is found in the nucleus. The enzyme catalyses guanosine(46) in tRNA + S-adenosyl-L-methionine = N(7)-methylguanosine(46) in tRNA + S-adenosyl-L-homocysteine. It participates in tRNA modification; N(7)-methylguanine-tRNA biosynthesis. Functionally, catalyzes the formation of N(7)-methylguanine at position 46 (m7G46) in tRNA. The polypeptide is tRNA (guanine-N(7)-)-methyltransferase (Scheffersomyces stipitis (strain ATCC 58785 / CBS 6054 / NBRC 10063 / NRRL Y-11545) (Yeast)).